We begin with the raw amino-acid sequence, 525 residues long: MSNIHEHKILILDFGSQYTQLIARRIREIGVYCELWAWDVSEAQIREFNPQGIILAGGPESVTAENSPRAPEYVFNAGVPVLGICYGMQTMSEQLGGKVIQGVGEGEFGYAQVEMLLESALFKGIEDAISPAGRPLLDVWMSHGDKVSAIPEGFKAVAKTDTCPFAAMANEEKRFYGVQFHPEVTHTRQGLRMLEHFAVAICGCGTNWKPSSIIEDAIERIKAQVGDDEVILGLSGGVDSSVVAMLLHRAIGKKLTCVFVDNGLLRLNEAEQVLEMFGDHFGLNIVHVDAENRFLDAMAGVADPEAKRKIIGRVFVEIFDEESKKCANAKWLAQGTIYPDVIESAGSATGKAHVIKSHHNVGGLPDDMEMGLVEPLRELFKDEVRKIGLELGLPYNMLYRHPFPGPGLGVRVLGEVKKEYCDLLRRADAIFIEELHKADLYNKVSQAFTVFLPVRSVGVMGDGRKYDWVVSLRAVETIDFMTAHWAHLPYDFLGRVSNRIINEVDGISRVVYDISGKPPATIEWE.

The 200-residue stretch at 8 to 207 folds into the Glutamine amidotransferase type-1 domain; it reads KILILDFGSQ…AVAICGCGTN (200 aa). The active-site Nucleophile is the cysteine 85. Active-site residues include histidine 181 and glutamate 183. The region spanning 208 to 400 is the GMPS ATP-PPase domain; sequence WKPSSIIEDA…LGLPYNMLYR (193 aa). Position 235-241 (235-241) interacts with ATP; that stretch reads SGGVDSS.

As to quaternary structure, homodimer.

It carries out the reaction XMP + L-glutamine + ATP + H2O = GMP + L-glutamate + AMP + diphosphate + 2 H(+). The protein operates within purine metabolism; GMP biosynthesis; GMP from XMP (L-Gln route): step 1/1. Catalyzes the synthesis of GMP from XMP. The sequence is that of GMP synthase [glutamine-hydrolyzing] from Shewanella denitrificans (strain OS217 / ATCC BAA-1090 / DSM 15013).